An 858-amino-acid polypeptide reads, in one-letter code: DNA mismatch repair protein MutS (858 aa).

602–609 lines the ATP pocket; that stretch reads GPNMSGKS.

It belongs to the DNA mismatch repair MutS family.

Functionally, this protein is involved in the repair of mismatches in DNA. It is possible that it carries out the mismatch recognition step. This protein has a weak ATPase activity. Overexpression of mutSL partially suppresses the high spontaneous mutation frequency of a ytkD/mutM/mutY triple disruption which lacks the system required to prevent damage by oxidized guanine (8-oxo-dGTP). This suggests that MutSL also functions to repair mismatches due to oxidative stress in both growing and stationary phase cells. In Bacillus subtilis (strain 168), this protein is DNA mismatch repair protein MutS.